Reading from the N-terminus, the 554-residue chain is Inactive serine/threonine-protein kinase/endoribonuclease IRE1-like (554 aa).

The first 17 residues, 1–17 (MWLLAISLVGLLVVVVC), serve as a signal peptide directing secretion. The disordered stretch occupies residues 36–85 (KRDKNSAPRVSASGEDGTKNEQVEKKSDPSGGLGEENEKTNSESKVLSVP). Positions 51 to 63 (DGTKNEQVEKKSD) are enriched in basic and acidic residues. One can recognise a Protein kinase domain in the interval 121 to 408 (LVSTNEMKYG…ATQVLLHPLF (288 aa)). Residue K150 participates in ATP binding. In terms of domain architecture, KEN spans 411-554 (SEKRLFFLRE…GEEAFEKYFN (144 aa)).

The protein belongs to the protein kinase superfamily. Ser/Thr protein kinase family.

In Arabidopsis thaliana (Mouse-ear cress), this protein is Inactive serine/threonine-protein kinase/endoribonuclease IRE1-like.